Here is a 179-residue protein sequence, read N- to C-terminus: Ubiquitin-conjugating enzyme E2 C (179 aa).

An N-acetylalanine modification is found at alanine 2. At serine 3 the chain carries Phosphoserine. The UBC core domain occupies 30 to 175 (PVGKRLQQEL…LQETYSKQVS (146 aa)). Cysteine 114 serves as the catalytic Glycyl thioester intermediate.

Belongs to the ubiquitin-conjugating enzyme family. In terms of assembly, component of the APC/C complex, composed of at least 14 distinct subunits that assemble into a complex of at least 19 chains with a combined molecular mass of around 1.2 MDa. Within this complex, directly interacts with ANAPC2. Post-translationally, autoubiquitinated by the APC/C complex, leading to its degradation by the proteasome. Its degradation plays a central role in APC/C regulation, allowing cyclin-A accumulation before S phase entry. APC/C substrates inhibit the autoubiquitination of UBE2C/UBCH10 but not its E2 function, hence APC/C remaining active until its substrates have been destroyed.

The enzyme catalyses S-ubiquitinyl-[E1 ubiquitin-activating enzyme]-L-cysteine + [E2 ubiquitin-conjugating enzyme]-L-cysteine = [E1 ubiquitin-activating enzyme]-L-cysteine + S-ubiquitinyl-[E2 ubiquitin-conjugating enzyme]-L-cysteine.. It carries out the reaction S-ubiquitinyl-[E1 ubiquitin-activating enzyme]-L-cysteine + [acceptor protein]-L-lysine = [E1 ubiquitin-activating enzyme]-L-cysteine + N(6)-monoubiquitinyl-[acceptor protein]-L-lysine.. It functions in the pathway protein modification; protein ubiquitination. In terms of biological role, accepts ubiquitin from the E1 complex and catalyzes its covalent attachment to other proteins. In vitro catalyzes 'Lys-11'- and 'Lys-48'-linked polyubiquitination. Acts as an essential factor of the anaphase promoting complex/cyclosome (APC/C), a cell cycle-regulated ubiquitin ligase that controls progression through mitosis. Acts by initiating 'Lys-11'-linked polyubiquitin chains on APC/C substrates, leading to the degradation of APC/C substrates by the proteasome and promoting mitotic exit. This Mus musculus (Mouse) protein is Ubiquitin-conjugating enzyme E2 C (Ube2c).